The primary structure comprises 259 residues: Kallikrein 1-related peptidase b22 (259 aa).

The N-terminal stretch at 1–17 (MRFLILFLTLSLGGIDA) is a signal peptide. Residues 18–24 (APPVQSR) constitute a propeptide, activation peptide. The region spanning 25–256 (ILGGFKCEKN…FTSWIKDTMA (232 aa)) is the Peptidase S1 domain. Cystine bridges form between C31–C171, C50–C66, C150–C217, C182–C196, and C207–C232. H65 serves as the catalytic Charge relay system. N-linked (GlcNAc...) asparagine glycosylation occurs at N102. The active-site Charge relay system is D118. S211 acts as the Charge relay system in catalysis.

It belongs to the peptidase S1 family. Kallikrein subfamily.

The catalysed reaction is Preferential cleavage of Arg-|-Xaa bonds in small molecule substrates. Highly selective action to release kallidin (lysyl-bradykinin) from kininogen involves hydrolysis of Met-|-Xaa or Leu-|-Xaa.. Glandular kallikreins cleave Met-Lys and Arg-Ser bonds in kininogen to release Lys-bradykinin. The protein is Kallikrein 1-related peptidase b22 (Klk1b22) of Mus musculus (Mouse).